The following is a 445-amino-acid chain: GTPase Der (445 aa).

2 EngA-type G domains span residues 3-167 (PVIA…YADQ) and 180-353 (IKIA…AAAM). GTP contacts are provided by residues 9-16 (GRPNVGKS), 56-60 (DTGGF), 119-122 (NKAE), 186-193 (GRPNVGKS), 233-237 (DTAGL), and 298-301 (NKWD). The KH-like domain occupies 354-438 (AKLPTPKLTR…PLRIEFRSST (85 aa)).

It belongs to the TRAFAC class TrmE-Era-EngA-EngB-Septin-like GTPase superfamily. EngA (Der) GTPase family. As to quaternary structure, associates with the 50S ribosomal subunit.

Functionally, GTPase that plays an essential role in the late steps of ribosome biogenesis. The polypeptide is GTPase Der (Burkholderia multivorans (strain ATCC 17616 / 249)).